The primary structure comprises 68 residues: UPF0434 protein H16_A0605 (68 aa).

Belongs to the UPF0434 family.

The protein is UPF0434 protein H16_A0605 of Cupriavidus necator (strain ATCC 17699 / DSM 428 / KCTC 22496 / NCIMB 10442 / H16 / Stanier 337) (Ralstonia eutropha).